The sequence spans 215 residues: MSKVYDWFEERLEIQAIADDITSKYVPPHVNIFYCLGGITLTCFLVQVATGFAMTFYYRPTVTEAFSSVQYIMTEANFGWLIRSVHRWSASMMVLMMILHVFRVYLTGGFKKPRELTWVTGVVLAVLTASFGVTGYSLPWDQIGYWAVKIVTGVPDAIPVIGSPLVELLRGSASVGQSTLTRFYSLHTFVLPLLTAVFMLMHFLMIRKQGISGPL.

A helical transmembrane segment spans residues 32-52 (IFYCLGGITLTCFLVQVATGF). Heme c is bound at residue Cys35. 2 residues coordinate heme b: His86 and His100. A run of 3 helical transmembrane segments spans residues 90 to 110 (ASMM…TGGF), 116 to 136 (LTWV…VTGY), and 186 to 206 (LHTF…FLMI). 2 residues coordinate heme b: His187 and His202.

The protein belongs to the cytochrome b family. PetB subfamily. As to quaternary structure, the 4 large subunits of the cytochrome b6-f complex are cytochrome b6, subunit IV (17 kDa polypeptide, PetD), cytochrome f and the Rieske protein, while the 4 small subunits are PetG, PetL, PetM and PetN. The complex functions as a dimer. Heme b serves as cofactor. The cofactor is heme c.

Its subcellular location is the plastid. It localises to the chloroplast thylakoid membrane. In terms of biological role, component of the cytochrome b6-f complex, which mediates electron transfer between photosystem II (PSII) and photosystem I (PSI), cyclic electron flow around PSI, and state transitions. The protein is Cytochrome b6 of Hordeum vulgare (Barley).